The primary structure comprises 2176 residues: Protein sidekick-2 (2176 aa).

The N-terminal stretch at 1–24 (MFSSMWRLPLWTLLALHRIHSAGA) is a signal peptide. Residues 25-1936 (QDDVPPYFKT…ASPFYEEWWF (1912 aa)) are Extracellular-facing. Ig-like C2-type domains are found at residues 30–112 (PYFK…TEVQ), 117–204 (GSFE…QPIT), 219–298 (PTII…SSVA), 312–402 (PQFV…LAVT), 406–495 (PNIT…ADLV), and 500–589 (TRIT…AHLR). A disulfide bond links Cys52 and Cys95. Asn197 carries N-linked (GlcNAc...) asparagine glycosylation. Disulfide bonds link Cys241/Cys288, Cys334/Cys384, Cys427/Cys479, and Cys521/Cys573. 13 consecutive Fibronectin type-III domains span residues 596-692 (APEH…LPEE), 697-793 (PPQN…TLQG), 798-897 (PPGN…THED), 901-995 (PVGH…VPPE), 999-1098 (APTN…TLQA), 1103-1201 (APAN…TRES), 1206-1303 (GPTN…TLDD), 1307-1401 (PPMG…TEKR), 1406-1503 (PPSK…TLQA), 1508-1625 (APTI…VGEA), 1630-1726 (APQN…TQQA), 1730-1825 (APGS…TGPG), and 1828-1930 (APGP…ASPF). N-linked (GlcNAc...) asparagine glycosylation occurs at Asn747. 2 N-linked (GlcNAc...) asparagine glycosylation sites follow: Asn940 and Asn952. N-linked (GlcNAc...) asparagine glycosylation is present at Asn1106. Asn1592 is a glycosylation site (N-linked (GlcNAc...) asparagine). Residues 1712-1734 (DGPRSTPTRGQTQQAAPSAPGSV) are disordered. A compositionally biased stretch (polar residues) spans 1716-1727 (STPTRGQTQQAA). Residues 1937–1957 (LVVIALVGLIFILLLVFVLII) form a helical membrane-spanning segment. The Cytoplasmic portion of the chain corresponds to 1958-2176 (RGQSKKYSKK…APIAGFSSFV (219 aa)). Disordered stretches follow at residues 2013 to 2032 (GLYT…YSDE), 2043 to 2070 (AESS…VDTN), and 2102 to 2176 (QAYS…SSFV). 2 stretches are compositionally biased toward polar residues: residues 2044–2070 (ESSS…VDTN) and 2119–2129 (VPNSNSTQQGS). Positions 2170–2176 (AGFSSFV) match the PDZ-binding motif.

It belongs to the sidekick family. Homodimer; mediates homophilic interactions to promote cell adhesion. Interacts (via PDZ-binding motif) with MAGI1, MAGI2, DLG2, DLG3 and DLG4. As to expression, expressed in retinal ganglion cells (RGCs) that form synapses in distinct inner plexiform layer (IPL) sublaminae. Specifically expressed in specific subsets of retinal ganglion cells (RGCs), named W3B-RGCs, that specifically respond when the timing of the movement of a small object differs from that of the background, but not when they coincide (at protein level). Also present in excitatory amacrine cell type called VG3-ACs, that provide strong and selective input W3B-RGCs (at protein level). Expressed at low levels in the glomeruli.

It localises to the cell membrane. Its subcellular location is the synapse. Adhesion molecule that promotes lamina-specific synaptic connections in the retina and is specifically required for the formation of neuronal circuits that detect motion. Acts by promoting formation of synapses between two specific retinal cell types: the retinal ganglion cells W3B-RGCs and the excitatory amacrine cells VG3-ACs. Formation of synapses between these two cells plays a key role in detection of motion. Promotes synaptic connectivity via homophilic interactions. In Mus musculus (Mouse), this protein is Protein sidekick-2.